Here is a 254-residue protein sequence, read N- to C-terminus: Emerin (254 aa).

Methionine 1 is modified (N-acetylmethionine). The 45-residue stretch at 1-45 (MDNYADLSDTELTTLLRRYNIPHGPVVGSTRRLYEKKIFEYETQR) folds into the LEM domain. Serine 8 and serine 29 each carry phosphoserine. Positions 46–222 (RRLSPPSSSA…PGAGLGQDRQ (177 aa)) are interaction with F-actin. Residue serine 49 is modified to Phosphoserine; by PKA. Residues serine 54, serine 60, serine 87, serine 98, serine 141, serine 142, and serine 143 each carry the phosphoserine modification. Tyrosine 161 is subject to Phosphotyrosine. The tract at residues 168-186 (RPVSASRSSLDLSYYPTSS) is interaction with CTNNB1. A phosphoserine mark is found at serine 171, serine 173, and serine 175. Residues 223-243 (VPLWGQLLLFLVFVIVLFFIY) form a helical membrane-spanning segment.

Interacts with lamins A and C, BANF1, GMCL, BCLAF1 and YTHDC1/YT521. Interacts with TMEM43; the interaction retains emerin in the nuclear inner membrane. Interacts with SUN1 and SUN2. Interacts with ACTB, SPTAN1, F-actin, CTNNB1 and beta-tubulin. Interacts with TMEM201. Interacts with NEMP1. In terms of processing, found in four different phosphorylated forms, three of which appear to be associated with the cell cycle. In terms of tissue distribution, skeletal muscle, heart, colon, testis, ovary and pancreas.

It is found in the nucleus inner membrane. The protein resides in the nucleus outer membrane. In terms of biological role, stabilizes and promotes the formation of a nuclear actin cortical network. Stimulates actin polymerization in vitro by binding and stabilizing the pointed end of growing filaments. Inhibits beta-catenin activity by preventing its accumulation in the nucleus. Acts by influencing the nuclear accumulation of beta-catenin through a CRM1-dependent export pathway. Links centrosomes to the nuclear envelope via a microtubule association. Required for proper localization of non-farnesylated prelamin-A/C. Together with NEMP1, contributes to nuclear envelope stiffness in germ cells. EMD and BAF are cooperative cofactors of HIV-1 infection. Association of EMD with the viral DNA requires the presence of BAF and viral integrase. The association of viral DNA with chromatin requires the presence of BAF and EMD. The chain is Emerin (EMD) from Homo sapiens (Human).